A 942-amino-acid chain; its full sequence is MVVSAGPWSSEKAEMNILEINEKLRPQLAENKQQFVNLKERCFLTQLAGFLANRQKKYKYEECKDLIRFMLRNERQFKEEKLAEQLKQAEELRQYKVLVHSQERELTQLKEKLQEGRDASRSLNEHLQALLTLDEPDKSQGQDLQEQLAEGCRLAQHLVQKLSPENDEDEDEDVQVEEDEKVQKSSAPREVQKAEESKVPEDSLEECAITCSNSHGPCDSNQPHKNIKITFEEDEVNSTLVVDRESSHDECQDALNILSVPGPTSSATNVSMVVSAGPLSSEKAEMNILEINEKLHPQLAEKKQQFRNLKEKCFLTQLAGFLANRQNKYKYEECKDLIKSMLRNERQFKEEKLAEQLKQAEELRQYKVLVHTQERELTQLREKLREGRDASLSLNEHLQALLTPDEPDKSQGQDLQEQLAEGCRLAQHLVQKLSPENDNDDDEDVQVEVAEKVQKSSAPREMQKAEEKEVPEDSLEECAITYSNSHGPYDSNQPHRKTKITFEEDKVDSALIGSSSHVEWEDAVHIIPENESDDEEEEEKGPVSPRNLQESEEEEVPQESWDEGYSTLSIPPEMLASYKSYSSTFHSLEEQQVCMAVDIGRHRWDQVKKEDQEATGPRLSRELLDEKGPEVLQDSLDRCYSTPSGCLELTDSCQPYRSAFYILEQQRVGLAVDMDEIEKYQEVEEDQDPSCPRLSRELLDEKEPEVLQDSLDRCYSTPSGYLELPDLGQPYSSAVYSLEEQYLGLALDVDRIKKDQEEEEDQGPPCPRLSRELLEVVEPEVLQDSLDRCYSTPSSCLEQPDSCQPYGSSFYALEEKHVGFSLDVGEIEKKGKGKIRRGRRSKKKRRRGRKEGEEDQNPPCPRLNSVLMEVEEPEVLQDSLDRCYSTPSMYCELRDSFQHYRSVFYSFEEQHISFALDMDNRFFTLTVTSLYLVFQMGVIFPQ.

Positions 89–130 (AEELRQYKVLVHSQERELTQLKEKLQEGRDASRSLNEHLQAL) form a coiled coil. The tract at residues 161 to 203 (KLSPENDEDEDEDVQVEEDEKVQKSSAPREVQKAEESKVPEDS) is disordered. Positions 165 to 180 (ENDEDEDEDVQVEEDE) are enriched in acidic residues. The Olduvai 1 domain occupies 165–259 (ENDEDEDEDV…ECQDALNILS (95 aa)). The span at 190–201 (EVQKAEESKVPE) shows a compositional bias: basic and acidic residues. A coiled-coil region spans residues 339-401 (KSMLRNERQF…LSLNEHLQAL (63 aa)). 6 consecutive Olduvai domains span residues 436-528 (ENDN…HIIP), 529-617 (ENES…ATGP), 620-675 (SREL…VDMD), 676-767 (EIEK…PPCP), 770-843 (SREL…RSKK), and 844-904 (KRRR…RSVF). Disordered stretches follow at residues 451-474 (EKVQKSSAPREMQKAEEKEVPEDS) and 528-566 (PENESDDEEEEEKGPVSPRNLQESEEEEVPQESWDEGYS). Composition is skewed to acidic residues over residues 530-539 (NESDDEEEEE) and 550-562 (ESEEEEVPQESWD). Positions 831–849 (GKGKIRRGRRSKKKRRRGR) are enriched in basic residues. A disordered region spans residues 831–863 (GKGKIRRGRRSKKKRRRGRKEGEEDQNPPCPRL).

It belongs to the NBPF family. In terms of tissue distribution, expressed in the mammary gland.

It is found in the cytoplasm. This Homo sapiens (Human) protein is NBPF family member NBPF8.